Reading from the N-terminus, the 290-residue chain is NAD kinase (290 aa).

The active-site Proton acceptor is the Asp72. NAD(+) contacts are provided by residues Asp72–Gly73, Lys77, Asn145–Glu146, Asp175, Thr186–Ser191, and Ala210.

This sequence belongs to the NAD kinase family. A divalent metal cation is required as a cofactor.

It is found in the cytoplasm. It catalyses the reaction NAD(+) + ATP = ADP + NADP(+) + H(+). In terms of biological role, involved in the regulation of the intracellular balance of NAD and NADP, and is a key enzyme in the biosynthesis of NADP. Catalyzes specifically the phosphorylation on 2'-hydroxyl of the adenosine moiety of NAD to yield NADP. This is NAD kinase from Bacteroides fragilis (strain ATCC 25285 / DSM 2151 / CCUG 4856 / JCM 11019 / LMG 10263 / NCTC 9343 / Onslow / VPI 2553 / EN-2).